The chain runs to 200 residues: Proteasome subunit beta 2 (200 aa).

Residue Met-1 is a propeptide, removed in mature form; by autocatalysis. Thr-2 functions as the Nucleophile in the catalytic mechanism.

The protein belongs to the peptidase T1B family. The 20S proteasome core is composed of 14 alpha and 14 beta subunits that assemble into four stacked heptameric rings, resulting in a barrel-shaped structure. The two inner rings, each composed of seven catalytic beta subunits, are sandwiched by two outer rings, each composed of seven alpha subunits. The catalytic chamber with the active sites is on the inside of the barrel. Has a gated structure, the ends of the cylinder being occluded by the N-termini of the alpha-subunits. Is capped at one or both ends by the proteasome regulatory ATPase, PAN.

It is found in the cytoplasm. The catalysed reaction is Cleavage of peptide bonds with very broad specificity.. The formation of the proteasomal ATPase PAN-20S proteasome complex, via the docking of the C-termini of PAN into the intersubunit pockets in the alpha-rings, triggers opening of the gate for substrate entry. Interconversion between the open-gate and close-gate conformations leads to a dynamic regulation of the 20S proteasome proteolysis activity. Its function is as follows. Component of the proteasome core, a large protease complex with broad specificity involved in protein degradation. This is Proteasome subunit beta 2 from Pyrobaculum islandicum (strain DSM 4184 / JCM 9189 / GEO3).